A 266-amino-acid chain; its full sequence is Movement protein (266 aa).

The tract at residues 211-244 is disordered; the sequence is SKTGKKFSSKSENNSGNNRPKPDKNQRKEKGLKV. A compositionally biased stretch (basic and acidic residues) spans 230-244; sequence PKPDKNQRKEKGLKV.

It belongs to the tobamovirus movement protein family. Binds to host RBCS at the plasmodesmata; this interaction seems required for viral systemic movement.

It is found in the host cytoplasm. It localises to the host cytoskeleton. Its subcellular location is the host cell junction. The protein localises to the host plasmodesma. Functionally, transports viral genome to neighboring plant cells directly through plasmosdesmata, without any budding. The movement protein allows efficient cell to cell propagation, by bypassing the host cell wall barrier. Forms a ribonucleoprotein complex with viral RNA. Binds microtubules and modulates microtubule stability. Can bind double-stranded DNA. Evades host resistance (R) protein (e.g. tomato ToMV resistance protein TM-2(2), AC Q71BG9) in ToMV/TMV resistant plants. The chain is Movement protein (MP) from Tomato brown rugose fruit virus (isolate TOBRFV/Tomato/Jordan/Tom1-Jo/2015) (ToBRFV).